The following is a 122-amino-acid chain: Large ribosomal subunit protein uL18 (122 aa).

Belongs to the universal ribosomal protein uL18 family. In terms of assembly, part of the 50S ribosomal subunit; part of the 5S rRNA/L5/L18/L25 subcomplex. Contacts the 5S and 23S rRNAs.

In terms of biological role, this is one of the proteins that bind and probably mediate the attachment of the 5S RNA into the large ribosomal subunit, where it forms part of the central protuberance. The sequence is that of Large ribosomal subunit protein uL18 from Pseudothermotoga lettingae (strain ATCC BAA-301 / DSM 14385 / NBRC 107922 / TMO) (Thermotoga lettingae).